The following is a 922-amino-acid chain: MADQAKLGGKPSDDSNFAMIRDGVASYLNDSDPEETNEWMDSLDGLLQESSPERARYLMLRLLERASAKRVSLPPMTSTDYVNTIPTSMEPEFPGDEEMEKRYRRWIRWNAAIMVHRAQRPGIGVGGHISTYAGAAPLYEVGFNHFFRGKDHPGGGDQIFFQGHASPGMYARAFMEGRLSEDDLDGFRQEVSREQGGIPSYPHPHGMKDFWEFPTVSMGLGPMDAIYQARFNRYLENRGIKDTSDQHVWAFLGDGEMDEPESRGLIQQAALNNLDNLTFVVNCNLQRLDGPVRGNTKIIQELESFFRGAGWSVIKVVWGREWDELLEKDQDGALVEIMNNTSDGDYQTFKANDGAYVREHFFGRDPRTAKLVENMTDEEIWKLPRGGHDYRKVYAAYKRALETKDRPTVILAHTIKGYGLGHNFEGRNATHQMKKLTLDDLKLFRDKQGIPITDEQLEKDPYLPPYYHPGEDAPEIKYMKERRAALGGYLPERRENYDPIQVPPLDKLRSVRKGSGKQQIATTMATVRTFKELMRDKGLADRLVPIIPDEARTFGLDSWFPTLKIYNPHGQNYVPVDHDLMLSYREAPEGQILHEGINEAGSVASFIAAGTSYATHGKAMIPLYIFYSMFGFQRTGDSIWAAADQMARGFLLGATAGRTTLTGEGLQHMDGHSPVLASTNEGVETYDPSFAYEIAHLVHRGIDRMYGPGKGEDVIYYITIYNEPTPQPAEPEGLDVEGLHKGIYLYSRGEGTGHEANILASGVGMQWALKAASILEADYGVRANIYSATSWVNLARDGAARNKAQLRNPGADAGEAFVTTQLKQTSGPYVAVSDFSTDLPNQIREWVPGDYTVLGADGFGFSDTRPAARRFFNIDAESIVVAVLNSLAREGKIDVSVAAQAAEKFKLDDPTSVSVDPNAPEE.

As to quaternary structure, homodimer. Part of an unusual ODH/PDH supercomplex, consisting of AceE (E1), AceF (E2), and Lpd (E3) together with OdhA (E1+E2). It depends on Mg(2+) as a cofactor. The cofactor is thiamine diphosphate.

The enzyme catalyses N(6)-[(R)-lipoyl]-L-lysyl-[protein] + pyruvate + H(+) = N(6)-[(R)-S(8)-acetyldihydrolipoyl]-L-lysyl-[protein] + CO2. Is a specific component of the pyruvate dehydrogenase (PDH) complex, that catalyzes the overall conversion of pyruvate to acetyl-CoA and CO(2). AceE has reductase activity with pyruvate but does not react with 2-oxoglutarate. The protein is Pyruvate dehydrogenase E1 component (aceE) of Corynebacterium glutamicum (strain ATCC 13032 / DSM 20300 / JCM 1318 / BCRC 11384 / CCUG 27702 / LMG 3730 / NBRC 12168 / NCIMB 10025 / NRRL B-2784 / 534).